Reading from the N-terminus, the 201-residue chain is 3-mercaptopropionate dioxygenase (201 aa).

Residues H89, H91, and H142 each contribute to the Fe cation site.

This sequence belongs to the cysteine dioxygenase family. Forms homodimer in the crystal; however, there is no evidence that the dimer exists under physiological conditions or has biological significance. The cofactor is Fe(2+).

The catalysed reaction is 3-sulfanylpropanoate + O2 = 3-sulfinopropanoate + H(+). In terms of biological role, thiol dioxygenase that catalyzes the dioxygenation of 3-mercaptopropionate (3-MPA) to 3-sulfinopropionate (3-SPA). To a lesser extent (40-fold lower efficiency), is also able to oxidize cysteine to cysteine sulfinate (CSA). Cannot use N-acetyl-L-cysteine, homocysteine, and cysteamine as substrates. The physiological role of this enzyme is unclear. This Pseudomonas aeruginosa (strain ATCC 15692 / DSM 22644 / CIP 104116 / JCM 14847 / LMG 12228 / 1C / PRS 101 / PAO1) protein is 3-mercaptopropionate dioxygenase.